Reading from the N-terminus, the 485-residue chain is T-complex protein 1 subunit theta (485 aa).

This sequence belongs to the TCP-1 chaperonin family. In terms of assembly, component of the T-complex protein 1 (TCP1) complex.

Its subcellular location is the cytoplasm. Its function is as follows. Molecular chaperone; assists the folding of proteins upon ATP hydrolysis. In Encephalitozoon cuniculi (strain GB-M1) (Microsporidian parasite), this protein is T-complex protein 1 subunit theta (CCT8).